Reading from the N-terminus, the 64-residue chain is Neurotoxin lambda-MeuTx (64 aa).

The signal sequence occupies residues 1 to 18 (MSTFIVVFLLLTAILCHA). Positions 19-27 (EHAIDETAR) are excised as a propeptide. Intrachain disulfides connect Cys-29–Cys-43, Cys-36–Cys-49, and Cys-42–Cys-58.

It belongs to the scorpion calcin-like family. Expressed by the venom gland.

Its subcellular location is the secreted. Its function is as follows. Voltage-gated potassium channel (Kv) inhibitor. In addition it may increase intracellular calcium release through the activation of nuclear inositol 1,4,5-trisphosphate receptors (ITPR) of cardiomyocytes, thereby causing an increase in the contraction frequency of these cells. The sequence is that of Neurotoxin lambda-MeuTx from Mesobuthus eupeus (Lesser Asian scorpion).